The following is a 500-amino-acid chain: Glutamate--tRNA ligase (500 aa).

The 'HIGH' region motif lies at 12–22 (PSPTGHLHIGN). Residues 259 to 263 (KLSKR) carry the 'KMSKS' region motif. Lys262 is a binding site for ATP.

The protein belongs to the class-I aminoacyl-tRNA synthetase family. Glutamate--tRNA ligase type 1 subfamily. In terms of assembly, monomer.

Its subcellular location is the cytoplasm. The catalysed reaction is tRNA(Glu) + L-glutamate + ATP = L-glutamyl-tRNA(Glu) + AMP + diphosphate. Catalyzes the attachment of glutamate to tRNA(Glu) in a two-step reaction: glutamate is first activated by ATP to form Glu-AMP and then transferred to the acceptor end of tRNA(Glu). This chain is Glutamate--tRNA ligase, found in Lactobacillus delbrueckii subsp. bulgaricus (strain ATCC BAA-365 / Lb-18).